We begin with the raw amino-acid sequence, 295 residues long: GTPase Era (295 aa).

Positions Tyr-5–Glu-172 constitute an Era-type G domain. The tract at residues Gly-13–Ser-20 is G1. GTP is bound at residue Gly-13 to Ser-20. The segment at Gln-39–Tyr-43 is G2. The tract at residues Asp-60 to Gly-63 is G3. GTP is bound by residues Asp-60 to Leu-64 and Asn-121 to Asp-124. The G4 stretch occupies residues Asn-121–Asp-124. Residues Leu-151 to Ala-153 are G5. Residues Leu-203–Ser-279 enclose the KH type-2 domain.

The protein belongs to the TRAFAC class TrmE-Era-EngA-EngB-Septin-like GTPase superfamily. Era GTPase family. Monomer.

The protein localises to the cytoplasm. It is found in the cell inner membrane. Functionally, an essential GTPase that binds both GDP and GTP, with rapid nucleotide exchange. Plays a role in 16S rRNA processing and 30S ribosomal subunit biogenesis and possibly also in cell cycle regulation and energy metabolism. This is GTPase Era from Coxiella burnetii (strain RSA 331 / Henzerling II).